Reading from the N-terminus, the 349-residue chain is Core protein VP7 (349 aa).

N-linked (GlcNAc...) asparagine; by host glycosylation is present at asparagine 287.

The protein belongs to the orbivirus VP7 family. As to quaternary structure, homotrimer that assemble in a complex of 260 capsomers on an inner scaffold composed of VP3.

It localises to the virion. Functionally, the VP7 protein is one of the five proteins (with VP1, VP3, VP4, and VP6) which form the inner capsid of the virus. The protein is Core protein VP7 (Segment-7) of Bluetongue virus 1 (isolate Australia) (BTV 1).